Here is a 276-residue protein sequence, read N- to C-terminus: MNNPKTAIQRQFNRSAAGSYDIHADVQRTMAAELAKSIIERNSRGKATEPKILEIGCGTGQFTELLLNQWPHVSITALDLAPAMIHTAEQRFKSRQSANIRFLQADVEIWAVEAPSDSFDLIVSNACFQWLSHPRQTISHLKRFLREGGSLVFTTFGPNTFLELHQAFAEVYHAYGMEPQRHGLSVLSTNQWEEVLAEAGFSTIYCQQDTQKETYASPRDFLRSIKSMGASHSEAIPIDGLSPRKLFNEMYKVYEEKFNMKDGIVATYEWLLIYAG.

It belongs to the methyltransferase superfamily.

The catalysed reaction is malonyl-[ACP] + S-adenosyl-L-methionine = malonyl-[ACP] methyl ester + S-adenosyl-L-homocysteine. It participates in cofactor biosynthesis; biotin biosynthesis. Its function is as follows. Converts the free carboxyl group of a malonyl-thioester to its methyl ester by transfer of a methyl group from S-adenosyl-L-methionine (SAM). It allows to synthesize pimeloyl-ACP via the fatty acid synthetic pathway. The protein is Malonyl-[acyl-carrier protein] O-methyltransferase of Paenibacillus sp. (strain JDR-2).